Reading from the N-terminus, the 259-residue chain is UPF0246 protein Aave_1172 (259 aa).

It belongs to the UPF0246 family.

In Paracidovorax citrulli (strain AAC00-1) (Acidovorax citrulli), this protein is UPF0246 protein Aave_1172.